Consider the following 169-residue polypeptide: Regulator of sigma D (169 aa).

The protein belongs to the Rsd/AlgQ family. As to quaternary structure, interacts with RpoD.

Its subcellular location is the cytoplasm. Binds RpoD and negatively regulates RpoD-mediated transcription activation by preventing the interaction between the primary sigma factor RpoD with the catalytic core of the RNA polymerase and with promoter DNA. May be involved in replacement of the RNA polymerase sigma subunit from RpoD to RpoS during the transition from exponential growth to the stationary phase. This is Regulator of sigma D from Yersinia pseudotuberculosis serotype O:1b (strain IP 31758).